A 747-amino-acid polypeptide reads, in one-letter code: DNA repair and recombination protein RAD54-like (747 aa).

Residues Met-1–Gln-42 are disordered. Positions Arg-2–Gln-9 are required for chromatin remodeling, strand pairing activities and coupling of ATPase activity. Ser-38 carries the post-translational modification Phosphoserine. Residues Ser-170–Gly-345 form the Helicase ATP-binding domain. Residue Asp-183–Thr-190 participates in ATP binding. A DEGH box motif is present at residues Asp-296–His-299. Residues Val-500–Glu-653 form the Helicase C-terminal domain. Lys-515 is subject to N6-acetyllysine. A Phosphoserine; by NEK1 modification is found at Ser-572.

This sequence belongs to the SNF2/RAD54 helicase family. Homohexamer. Interacts (via N-terminus) with RAD51. Interacts with NAP1L1. Interacts with BRD9; this interaction orchestrates RAD51-RAD54 complex formation. Acetylated. Acetylation promotes interaction with BRD9, and subsequently with RAD54, which is essential for homologous recombination (HR). In terms of processing, phosphorylated. Phosphorylation at Ser-572 by NEK1 specifically in G2 phase allows efficient removal of RAD51 filaments from DNA. Hardly detectable in most tissues. Dramatically increased in thymus, spleen and testis.

The protein resides in the nucleus. The enzyme catalyses ATP + H2O = ADP + phosphate + H(+). In terms of biological role, plays an essential role in homologous recombination (HR) which is a major pathway for repairing DNA double-strand breaks (DSBs), single-stranded DNA (ssDNA) gaps, and stalled or collapsed replication forks. Acts as a molecular motor during the homology search and guides RAD51 ssDNA along a donor dsDNA thereby changing the homology search from the diffusion-based mechanism to a motor-guided mechanism. Plays also an essential role in RAD51-mediated synaptic complex formation which consists of three strands encased in a protein filament formed once homology is recognized. Once DNA strand exchange occured, dissociates RAD51 from nucleoprotein filaments formed on dsDNA. Deficiency also resulted in an increased frequency of end-to-end chromosome fusions involving telomeres compared to the controls, suggesting a putative role in telomere capping. Non-homologous end joining (NHEJ) and homologous recombination (HR) represent the two major pathways of DNA double-strand break (DSB) repair in eukaryotic cells. LIG4 and RAD54L cooperate to support cellular proliferation, repair spontaneous DSBs, and prevent chromosome and single chromatid aberrations. The protein is DNA repair and recombination protein RAD54-like (Rad54l) of Mus musculus (Mouse).